A 256-amino-acid chain; its full sequence is 5-keto-4-deoxy-D-glucarate aldolase (256 aa).

Residue histidine 50 is the Proton acceptor of the active site. Glutamine 151 contacts substrate. Glutamate 153 is a Mg(2+) binding site. 2 residues coordinate substrate: serine 178 and aspartate 179. Aspartate 179 is a Mg(2+) binding site.

Belongs to the HpcH/HpaI aldolase family. KDGluc aldolase subfamily. In terms of assembly, homohexamer; trimer of dimers. Mg(2+) serves as cofactor.

The enzyme catalyses 5-dehydro-4-deoxy-D-glucarate = 2-hydroxy-3-oxopropanoate + pyruvate. It catalyses the reaction 2-dehydro-3-deoxy-D-glucarate = 2-hydroxy-3-oxopropanoate + pyruvate. The protein operates within carbohydrate acid metabolism; galactarate degradation; D-glycerate from galactarate: step 2/3. In terms of biological role, catalyzes the reversible retro-aldol cleavage of both 5-keto-4-deoxy-D-glucarate and 2-keto-3-deoxy-D-glucarate to pyruvate and tartronic semialdehyde. The sequence is that of 5-keto-4-deoxy-D-glucarate aldolase from Salmonella paratyphi C (strain RKS4594).